The chain runs to 450 residues: Sensor histidine kinase EnvZ (450 aa).

Residues 1–15 (MRRLRFSPRSSFART) are Cytoplasmic-facing. A helical transmembrane segment spans residues 16-35 (LLLIVTLLFASLVTTYLVVL). The Periplasmic segment spans residues 36-158 (NFAILPSLQQ…LTEIHQGDFS (123 aa)). A polyP-periplasmic motif motif is present at residues 71–75 (VVPPA). The chain crosses the membrane as a helical span at residues 159–179 (PLFRYTLAIMLLAIGGAWLFI). The HAMP domain maps to 180–232 (RIQNRPLVDLEHAALQVGKGIIPPPLREYGASEVRSVTRAFNHMAAGVKQLAD). Over 180-450 (RIQNRPLVDL…TRAQGTTKEG (271 aa)) the chain is Cytoplasmic. The polyP-cytoplasmic motif motif lies at 201–205 (IPPPL). A cytoplasmic dimerization domain (CDD), when dimerized forms osmosensitive core region spans residues 223-289 (MAAGVKQLAD…IIEQFIDYLR (67 aa)). Residues 240–440 (GVSHDLRTPL…SIRAWLPVPV (201 aa)) form the Histidine kinase domain. ATP is bound by residues histidine 243, 347-351 (NAARY), aspartate 373, 392-393 (RG), and 402-406 (TGLGL). Position 243 is a phosphohistidine; by autocatalysis (histidine 243).

As to quaternary structure, homodimer. Interacts with MzrA. Autophosphorylated. Incubation of isolated EnvZ C-terminal fragment (residues 180-450) with increasing levels of NaCl or sucrose increases its autophosphorylation.

The protein localises to the cell inner membrane. It catalyses the reaction ATP + protein L-histidine = ADP + protein N-phospho-L-histidine.. With respect to regulation, activity is modulated by MzrA. In the presence of 0.2 M NaCl, 2.0 mM sodium cholate (bile salts) decreases expression from the ompC promoter; how this is mediated is unknown. Autophosphorylation is inhibited by the angucycline antibiotic waldiomycin in a non-competitive manner; waldiomycin prevents dimerization of the cytoplasmic domain and autophosphorylation. In terms of biological role, member of the two-component regulatory system EnvZ/OmpR involved in osmoregulation (particularly of genes ompF and ompC) as well as other genes. EnvZ functions as a membrane-associated protein kinase that phosphorylates OmpR in response to environmental signals; at low osmolarity OmpR activates ompF transcription, while at high osmolarity it represses ompF and activates ompC transcription. Also dephosphorylates OmpR in the presence of ATP. The cytoplasmic dimerization domain (CDD) forms an osmosensitive core; increasing osmolarity stabilizes this segment (possibly by its contraction), enhancing the autophosphorylation rate and consequently, downstream phosphotransfer to OmpR and signaling. Autophosphorylation is greater when full-length EnvZ is reconstituted in a lipid environment, lipid-mediated allostery impacts the kinase function of EnvZ. Involved in acid stress response; this requires EnvZ but not OmpR phosphorylation, and suggests that EnvZ senses cytoplasmic acidic pH. The polypeptide is Sensor histidine kinase EnvZ (envZ) (Escherichia coli (strain K12)).